An 803-amino-acid polypeptide reads, in one-letter code: Nuclear factor of activated T-cells, cytoplasmic 1 (803 aa).

Residues 101-106 (PRIEIT) form a calcineurin-binding region. The interval 109 to 199 (LGLHHNSSQF…CVSPKTTDPE (91 aa)) is transactivation domain A (TAD-A). A compositionally biased stretch (polar residues) spans 181–195 (PQTSPWQSPCVSPKT). The tract at residues 181-279 (PQTSPWQSPC…GSPRVSVTDD (99 aa)) is disordered. Repeat copies occupy residues 184–200 (SPWQSPCVSPKTTDPEE) and 214–230 (SPRHSPSTSPRTSVTEE). The tract at residues 184–279 (SPWQSPCVSP…GSPRVSVTDD (96 aa)) is 3 X SP repeats. A phosphoserine mark is found at serine 214 and serine 218. Positions 214-231 (SPRHSPSTSPRTSVTEES) are enriched in low complexity. Serine 226 carries the phosphoserine; by PKA modification. A Nuclear localization signal motif is present at residues 246-248 (KRK). The stretch at 263-279 (SPTPSPQGSPRVSVTDD) is repeat 3. A Phosphoserine; by PKA modification is found at serine 275. The short motif at 291–302 (SAIVAAINALST) is the Nuclear export signal element. The region spanning 389 to 571 (PSLPALDWQL…NPIECSQRSA (183 aa)) is the RHD domain. A DNA-binding region spans residues 418-425 (RAHYETEG). Residues 661–663 (KRK) carry the Nuclear localization signal motif. The interval 723–803 (LMPGFPPRPQ…QPQVSPTSSG (81 aa)) is disordered. A compositionally biased stretch (pro residues) spans 778-792 (SGVPPGPPQPPPPTL). Positions 793–803 (LQPQVSPTSSG) are enriched in low complexity.

As to quaternary structure, member of the multicomponent NFATC transcription complex that consists of at least two components, a pre-existing cytoplasmic component NFATC2 and an inducible nuclear component NFATC1. Other members such as NFATC4, NFATC3 or members of the activating protein-1 family, MAF, GATA4 and Cbp/p300 can also bind the complex. NFATC proteins bind to DNA as monomers. Interacts with HOMER2 and HOMER3; this interaction may compete with calcineurin/PPP3CA-binding and hence prevent NFATC1 dephosphorylation and activation. Interacts with TLE6/GRG6. In terms of processing, phosphorylated by NFATC-kinase and GSK3B; phosphorylation induces NFATC1 nuclear exit and dephosphorylation by calcineurin promotes nuclear import. Phosphorylation by PKA and DYRK2 negatively modulates nuclear accumulation, and promotes subsequent phosphorylation by GSK3B or casein kinase 1.

The protein localises to the cytoplasm. It localises to the nucleus. Functionally, plays a role in the inducible expression of cytokine genes in T-cells, especially in the induction of the IL-2 or IL-4 gene transcription. Also controls gene expression in embryonic cardiac cells. Could regulate not only the activation and proliferation but also the differentiation and programmed death of T-lymphocytes as well as lymphoid and non-lymphoid cells. Required for osteoclastogenesis and regulates many genes important for osteoclast differentiation and function. The polypeptide is Nuclear factor of activated T-cells, cytoplasmic 1 (Bos taurus (Bovine)).